A 180-amino-acid polypeptide reads, in one-letter code: NADH-quinone oxidoreductase subunit B (180 aa).

The [4Fe-4S] cluster site is built by cysteine 59, cysteine 60, cysteine 124, and cysteine 154.

It belongs to the complex I 20 kDa subunit family. NDH-1 is composed of 14 different subunits. Subunits NuoB, C, D, E, F, and G constitute the peripheral sector of the complex. [4Fe-4S] cluster serves as cofactor.

It localises to the cell inner membrane. It catalyses the reaction a quinone + NADH + 5 H(+)(in) = a quinol + NAD(+) + 4 H(+)(out). In terms of biological role, NDH-1 shuttles electrons from NADH, via FMN and iron-sulfur (Fe-S) centers, to quinones in the respiratory chain. The immediate electron acceptor for the enzyme in this species is believed to be ubiquinone. Couples the redox reaction to proton translocation (for every two electrons transferred, four hydrogen ions are translocated across the cytoplasmic membrane), and thus conserves the redox energy in a proton gradient. The sequence is that of NADH-quinone oxidoreductase subunit B from Beijerinckia indica subsp. indica (strain ATCC 9039 / DSM 1715 / NCIMB 8712).